Consider the following 62-residue polypeptide: uncharacterized protein (62 aa).

This is an uncharacterized protein from Dictyostelium discoideum (Social amoeba).